Consider the following 176-residue polypeptide: ATP-dependent protease subunit HslV (176 aa).

Residue Thr2 is part of the active site. The Na(+) site is built by Gly157, Cys160, and Thr163.

It belongs to the peptidase T1B family. HslV subfamily. A double ring-shaped homohexamer of HslV is capped on each side by a ring-shaped HslU homohexamer. The assembly of the HslU/HslV complex is dependent on binding of ATP.

The protein localises to the cytoplasm. It carries out the reaction ATP-dependent cleavage of peptide bonds with broad specificity.. Its activity is regulated as follows. Allosterically activated by HslU binding. In terms of biological role, protease subunit of a proteasome-like degradation complex believed to be a general protein degrading machinery. The chain is ATP-dependent protease subunit HslV from Erwinia tasmaniensis (strain DSM 17950 / CFBP 7177 / CIP 109463 / NCPPB 4357 / Et1/99).